Consider the following 811-residue polypeptide: Lon protease 1 (811 aa).

The 198-residue stretch at 15–212 (LPVLSLRDTV…SLALHLYRQI (198 aa)) folds into the Lon N-terminal domain. Position 376-383 (376-383 (GPPGTGKT)) interacts with ATP. The region spanning 613–794 (YDQPGVATGM…DEALARCLRL (182 aa)) is the Lon proteolytic domain. Residues Ser-700 and Lys-743 contribute to the active site.

It belongs to the peptidase S16 family. Homohexamer. Organized in a ring with a central cavity.

It is found in the cytoplasm. It catalyses the reaction Hydrolysis of proteins in presence of ATP.. Functionally, ATP-dependent serine protease that mediates the selective degradation of mutant and abnormal proteins as well as certain short-lived regulatory proteins. Required for cellular homeostasis and for survival from DNA damage and developmental changes induced by stress. Degrades polypeptides processively to yield small peptide fragments that are 5 to 10 amino acids long. Binds to DNA in a double-stranded, site-specific manner. The sequence is that of Lon protease 1 from Sorangium cellulosum (strain So ce56) (Polyangium cellulosum (strain So ce56)).